The primary structure comprises 221 residues: Thymidylate kinase (221 aa).

An ATP-binding site is contributed by 11–18 (GPDGAGKT).

This sequence belongs to the thymidylate kinase family.

It carries out the reaction dTMP + ATP = dTDP + ADP. Functionally, phosphorylation of dTMP to form dTDP in both de novo and salvage pathways of dTTP synthesis. The chain is Thymidylate kinase from Lactiplantibacillus plantarum (strain ATCC BAA-793 / NCIMB 8826 / WCFS1) (Lactobacillus plantarum).